The chain runs to 670 residues: tRNA 5-methylaminomethyl-2-thiouridine biosynthesis bifunctional protein MnmC (670 aa).

The tract at residues 1–242 (MTFSVQHAEI…KRECLSGLKI (242 aa)) is tRNA (mnm(5)s(2)U34)-methyltransferase. Positions 269-670 (IGGGIASLCA…KKWLKGSKVE (402 aa)) are FAD-dependent cmnm(5)s(2)U34 oxidoreductase.

In the N-terminal section; belongs to the methyltransferase superfamily. tRNA (mnm(5)s(2)U34)-methyltransferase family. The protein in the C-terminal section; belongs to the DAO family. Requires FAD as cofactor.

The protein localises to the cytoplasm. It catalyses the reaction 5-aminomethyl-2-thiouridine(34) in tRNA + S-adenosyl-L-methionine = 5-methylaminomethyl-2-thiouridine(34) in tRNA + S-adenosyl-L-homocysteine + H(+). Catalyzes the last two steps in the biosynthesis of 5-methylaminomethyl-2-thiouridine (mnm(5)s(2)U) at the wobble position (U34) in tRNA. Catalyzes the FAD-dependent demodification of cmnm(5)s(2)U34 to nm(5)s(2)U34, followed by the transfer of a methyl group from S-adenosyl-L-methionine to nm(5)s(2)U34, to form mnm(5)s(2)U34. This chain is tRNA 5-methylaminomethyl-2-thiouridine biosynthesis bifunctional protein MnmC, found in Haemophilus influenzae (strain PittEE).